Here is a 403-residue protein sequence, read N- to C-terminus: Phosphopentomutase (403 aa).

6 residues coordinate Mn(2+): aspartate 13, aspartate 298, histidine 303, aspartate 339, histidine 340, and histidine 351.

Belongs to the phosphopentomutase family. Mn(2+) is required as a cofactor.

It is found in the cytoplasm. The enzyme catalyses 2-deoxy-alpha-D-ribose 1-phosphate = 2-deoxy-D-ribose 5-phosphate. It catalyses the reaction alpha-D-ribose 1-phosphate = D-ribose 5-phosphate. It functions in the pathway carbohydrate degradation; 2-deoxy-D-ribose 1-phosphate degradation; D-glyceraldehyde 3-phosphate and acetaldehyde from 2-deoxy-alpha-D-ribose 1-phosphate: step 1/2. In terms of biological role, isomerase that catalyzes the conversion of deoxy-ribose 1-phosphate (dRib-1-P) and ribose 1-phosphate (Rib-1-P) to deoxy-ribose 5-phosphate (dRib-5-P) and ribose 5-phosphate (Rib-5-P), respectively. In Streptococcus mutans serotype c (strain ATCC 700610 / UA159), this protein is Phosphopentomutase.